The primary structure comprises 647 residues: MESKCLMFVSIVSVFFMVVNGVSETETLLKFKNSLVIGRANALESWNRRNPPCKWTGVLCDRGFVWGLRLENLELSGSIDIEALMGLNSLRSLSFINNKFKGPFPEFKKLVALKSLYLSNNQFDLEIPKDAFDGMGWLKKLHLEQNNFIGEIPTSLVKSPKLIELRLDGNRFTGQIPEFRHHPNMLNLSNNALAGQIPNSFSTMDPKLFEGNKGLCGKPLDTKCSSPYNHSSEPKSSTKKTSSKFLYIVAAAVAALAASLIIIGVVIFLIRRRKKKQPLLSAEPGPSSLQMRAGIQESERGQGSYHSQNRAAKKMIHTTKLSFLRDDKGKFELQDLLKASAEILGSGCFGASYKTLLSNGSVMVVKRFKHMNSAGIDEFQEHMKRLGRLNHENLLPIVAYYYKKEEKLFVSDFVANGSLAAHLHGHKSLGQPSLDWPTRFNIVKGVGRGLLYLHKNLPSLMAPHGHLKSSNVLLSEKFEPLLMDYGLIPMINEESAQELMVAYKSPEYVKQSRVTKKTDVWGLGVLILEILTGKLLESFSQVDKESEEDLASWVRSSFKGEWTQELFDQEMGKTSNCEAHILNLMRIGLSCCEVDVEKRLDIREAVEKMEDLMKEREQGDDDFYSTYASEADGRSSRGLSSEGINLS.

Residues 1-21 form the signal peptide; sequence MESKCLMFVSIVSVFFMVVNG. LRR repeat units lie at residues 87 to 109, 110 to 134, 136 to 159, 161 to 183, and 185 to 203; these read LNSL…EFKK, LVAL…AFDG, GWLK…LVKS, KLIE…RHHP, and MLNL…SFST. Residues 248-268 traverse the membrane as a helical segment; the sequence is IVAAAVAALAASLIIIGVVIF. Residues 338–613 enclose the Protein kinase domain; that stretch reads KASAEILGSG…EAVEKMEDLM (276 aa). S340 is subject to Phosphoserine. Residues 344–352 and K366 contribute to the ATP site; that span reads LGSGCFGAS. S418 is modified (phosphoserine). A Phosphothreonine modification is found at T438. Y508 carries the phosphotyrosine modification. The disordered stretch occupies residues 620–647; it reads DDDFYSTYASEADGRSSRGLSSEGINLS. Polar residues predominate over residues 637–647; that stretch reads RGLSSEGINLS.

Belongs to the protein kinase superfamily. Ser/Thr protein kinase family. As to quaternary structure, part of a complex containing ROPGEF1 and ARAC11/ROP1. The interaction between PRK2, ROPGEF1 and ARAC11/ROP1 is phosphorylation-independent. Interacts with ROPGEF12 (via C-terminus). Interacts with ROPGEF1 (via PRONE domain). As to expression, expressed in pollen and/or in flowers, but not in leaves. Expressed in pollen tube.

Its subcellular location is the cell membrane. The enzyme catalyses L-seryl-[protein] + ATP = O-phospho-L-seryl-[protein] + ADP + H(+). The catalysed reaction is L-threonyl-[protein] + ATP = O-phospho-L-threonyl-[protein] + ADP + H(+). Its activity is regulated as follows. The phosphorylation activity is calcium-independent. Its function is as follows. Receptor-like kinase involved in the control of pollen germination and pollen tube polar growth. Phosphorylates ROPGEF1 in its C-terminal region, releasing its auto-inhibition, and thereby activating the ROP1 signaling pathway. May act as a scaffolding protein, recruiting ROPGEF12 to the plasma membrane by binding to its C-terminal domain. Phosphorylates ROPGEF12, releasing its auto-inhibition. This chain is Pollen receptor-like kinase 2, found in Arabidopsis thaliana (Mouse-ear cress).